Here is a 224-residue protein sequence, read N- to C-terminus: Non-structural protein 3 (224 aa).

A CoV 3a-like viroporin TM domain is found at 34-124 (NVVPIRQASN…RYKNALFIIF (91 aa)). 3 helical membrane-spanning segments follow: residues 40–60 (QASNVTGFLFTSVFVYFFALF), 69–88 (YIMLAARFAVVFLYCPLLYY), and 95–111 (ATIICCALIGRLCLVCF). The 76-residue stretch at 128–203 (TLSFLNGKAA…KLYVFSQHQI (76 aa)) folds into the CoV 3a-like viroporin CD domain.

Its subcellular location is the host membrane. This Sus scrofa (Pig) protein is Non-structural protein 3.